The sequence spans 331 residues: Methionyl-tRNA formyltransferase (331 aa).

111–114 lines the (6S)-5,6,7,8-tetrahydrofolate pocket; the sequence is SLLP.

Belongs to the Fmt family.

The enzyme catalyses L-methionyl-tRNA(fMet) + (6R)-10-formyltetrahydrofolate = N-formyl-L-methionyl-tRNA(fMet) + (6S)-5,6,7,8-tetrahydrofolate + H(+). Its function is as follows. Attaches a formyl group to the free amino group of methionyl-tRNA(fMet). The formyl group appears to play a dual role in the initiator identity of N-formylmethionyl-tRNA by promoting its recognition by IF2 and preventing the misappropriation of this tRNA by the elongation apparatus. This chain is Methionyl-tRNA formyltransferase, found in Thermosynechococcus vestitus (strain NIES-2133 / IAM M-273 / BP-1).